The sequence spans 128 residues: Small ribosomal subunit protein uS13 (128 aa).

The segment at 97–128 is disordered; that stretch reads PVRGQRTRSNARTRKGPRPSRIKTKKKKEQTV. Positions 101 to 128 are enriched in basic residues; that stretch reads QRTRSNARTRKGPRPSRIKTKKKKEQTV.

Belongs to the universal ribosomal protein uS13 family. Part of the 30S ribosomal subunit. Forms a loose heterodimer with protein S19. Forms two bridges to the 50S subunit in the 70S ribosome.

Functionally, located at the top of the head of the 30S subunit, it contacts several helices of the 16S rRNA. In the 70S ribosome it contacts the 23S rRNA (bridge B1a) and protein L5 of the 50S subunit (bridge B1b), connecting the 2 subunits; these bridges are implicated in subunit movement. Contacts the tRNAs in the A and P-sites. The polypeptide is Small ribosomal subunit protein uS13 (Pseudothermotoga lettingae (strain ATCC BAA-301 / DSM 14385 / NBRC 107922 / TMO) (Thermotoga lettingae)).